The following is a 391-amino-acid chain: Apolipoprotein A-IV (391 aa).

Positions 1 to 20 (MFLKAVVLTVALVAITGTQA) are cleaved as a signal peptide. 13 consecutive repeat copies span residues 33-54 (DYFT…KTDV), 60-81 (TLFQ…NKLV), 82-103 (PFAV…EEIQ), 115-136 (PHAN…EHLR), 137-158 (PYAT…RQLT), 159-180 (PYIQ…SSMV), 181-202 (PFAN…GQLT), 203-224 (PRAN…SRLA), 225-246 (PLAE…FQMK), 247-268 (KNAE…KNLA), 269-286 (PLVE…EGLQ), 287-308 (KSLE…RAVE), and 309-330 (PLGD…QQLG). The segment at 33–330 (DYFTQLSNNA…QMEKFRQQLG (298 aa)) is 13 X 22 AA approximate tandem repeats. A Phosphoserine modification is found at Ser333. Residues 354-391 (FMSTLQKKGSPDQPLALPLPEQVQEQVQEQVQPKPLES) form a disordered region. The span at 371 to 391 (PLPEQVQEQVQEQVQPKPLES) shows a compositional bias: low complexity.

Belongs to the apolipoprotein A1/A4/E family. As to quaternary structure, homodimer. As to expression, secreted in plasma.

The protein resides in the secreted. In terms of biological role, may have a role in chylomicrons and VLDL secretion and catabolism. Required for efficient activation of lipoprotein lipase by ApoC-II; potent activator of LCAT. Apoa-IV is a major component of HDL and chylomicrons. The protein is Apolipoprotein A-IV (Apoa4) of Rattus norvegicus (Rat).